The following is a 659-amino-acid chain: Centrosomal protein of 76 kDa (659 aa).

Residues Ser75 and Ser83 each carry the phosphoserine modification.

This sequence belongs to the CEP76 family. Interacts with CCP110 and CEP97.

The protein resides in the cytoplasm. The protein localises to the cytoskeleton. It is found in the microtubule organizing center. Its subcellular location is the centrosome. It localises to the centriole. In terms of biological role, centrosomal protein involved in regulation of centriole duplication. Required to limit centriole duplication to once per cell cycle by preventing centriole reduplication. This is Centrosomal protein of 76 kDa (CEP76) from Homo sapiens (Human).